We begin with the raw amino-acid sequence, 188 residues long: Elongation factor P-like protein (188 aa).

This sequence belongs to the elongation factor P family.

This Stenotrophomonas maltophilia (strain K279a) protein is Elongation factor P-like protein.